A 474-amino-acid chain; its full sequence is 3-isopropylmalate dehydratase large subunit (474 aa).

The [4Fe-4S] cluster site is built by C355, C415, and C418.

Belongs to the aconitase/IPM isomerase family. LeuC type 1 subfamily. Heterodimer of LeuC and LeuD. It depends on [4Fe-4S] cluster as a cofactor.

The enzyme catalyses (2R,3S)-3-isopropylmalate = (2S)-2-isopropylmalate. It participates in amino-acid biosynthesis; L-leucine biosynthesis; L-leucine from 3-methyl-2-oxobutanoate: step 2/4. Its function is as follows. Catalyzes the isomerization between 2-isopropylmalate and 3-isopropylmalate, via the formation of 2-isopropylmaleate. This chain is 3-isopropylmalate dehydratase large subunit, found in Shewanella sp. (strain ANA-3).